We begin with the raw amino-acid sequence, 375 residues long: Probable 1-acyl-sn-glycerol-3-phosphate acyltransferase 5 (375 aa).

The next 2 helical transmembrane spans lie at 21-41 and 57-77; these read IICLMVLVSTAFMMLIFWGFL and CVSFFFGSWLALWPFLFEKIN. The HXXXXD motif signature appears at 100-105; it reads HRTEVD. 2 helical membrane-spanning segments follow: residues 312 to 332 and 337 to 357; these read YLINCLAVIAFTTICTHLTFF and WFRIYVSLACVYLTSATHFNL.

It belongs to the 1-acyl-sn-glycerol-3-phosphate acyltransferase family. Widely expressed at low level.

The protein localises to the membrane. The catalysed reaction is a 1-acyl-sn-glycero-3-phosphate + an acyl-CoA = a 1,2-diacyl-sn-glycero-3-phosphate + CoA. It participates in phospholipid metabolism; CDP-diacylglycerol biosynthesis; CDP-diacylglycerol from sn-glycerol 3-phosphate: step 2/3. May convert lysophosphatidic acid (LPA) into phosphatidic acid by incorporating acyl moiety at the 2 position. Has no activity when expressed in bacteria or yeast. The sequence is that of Probable 1-acyl-sn-glycerol-3-phosphate acyltransferase 5 (LPAT5) from Arabidopsis thaliana (Mouse-ear cress).